Consider the following 329-residue polypeptide: Short-chain dehydrogenase/reductase tropG (329 aa).

K57, D86, N113, Y203, and K207 together coordinate NADP(+). Residue Y203 is the Proton acceptor of the active site. K207 acts as the Lowers pKa of active site Tyr in catalysis.

Belongs to the short-chain dehydrogenases/reductases (SDR) family.

It participates in secondary metabolite biosynthesis. Short-chain dehydrogenase/reductase; part of the gene cluster that mediates the biosynthesis of the tropolone class of fungal maleic anhydrides. The pathway begins with the synthesis of 3-methylorcinaldehyde by the non-reducing polyketide synthase (PKS) tropA. 3-methylorcinaldehyde is the substrate for the FAD-dependent monooxygenase tropB to yield a dearomatized hydroxycyclohexadione. The 2-oxoglutarate-dependent dioxygenase tropC then performs the oxidative ring expansion to provide the first tropolone metabolite stipitaldehyde. Trop D converts stipitaldehyde into stipitacetal which is in turn converted to stipitalide by the short-chain dehydrogenase/reductase tropE. The next steps involve tropF, tropG, tropH, tropI and tropJ to form successive tropolone maleic anhydrides including stipitaldehydic, stipitatonic and stipitatic acids. The sequence is that of Short-chain dehydrogenase/reductase tropG from Talaromyces stipitatus (strain ATCC 10500 / CBS 375.48 / QM 6759 / NRRL 1006) (Penicillium stipitatum).